The sequence spans 71 residues: MTATEVKAKILSLLDEVAQGEEIEITKHGRTVARLVAATGPHALKGRFSGVAMAAADDDELFTTGVSWNVS.

Belongs to the phD/YefM antitoxin family.

Its function is as follows. Antitoxin component of a type II toxin-antitoxin (TA) system. Upon expression in M.smegmatis neutralizes the effect of cognate toxin VapC22. The chain is Antitoxin VapB22 (vapB22) from Mycobacterium tuberculosis (strain ATCC 25618 / H37Rv).